A 277-amino-acid polypeptide reads, in one-letter code: Undecaprenyl-diphosphatase (277 aa).

A run of 6 helical transmembrane segments spans residues 88–108 (MGWL…LFQD), 117–137 (MWIV…ADAV), 157–179 (FAQA…AGLL), 191–211 (SFLL…YKVV), 227–247 (LATV…LKFV), and 255–275 (FVWY…FGVI).

It belongs to the UppP family.

The protein localises to the cell membrane. It carries out the reaction di-trans,octa-cis-undecaprenyl diphosphate + H2O = di-trans,octa-cis-undecaprenyl phosphate + phosphate + H(+). Its function is as follows. Catalyzes the dephosphorylation of undecaprenyl diphosphate (UPP). Confers resistance to bacitracin. In Pseudarthrobacter chlorophenolicus (strain ATCC 700700 / DSM 12829 / CIP 107037 / JCM 12360 / KCTC 9906 / NCIMB 13794 / A6) (Arthrobacter chlorophenolicus), this protein is Undecaprenyl-diphosphatase.